The chain runs to 176 residues: MYGTTILSIRKDKSVIVIGDGQVSLGHTVIKSGAKKVRRLSSDSVIAGFAGATADAFTLFERLESKLDKHPGQLMRACVELAKDWRMDKYLRKLEAMMIVADKSISLVITGTGDVLEPEDGIAAIGSGGNFALSAAKALIDIKGISIEEIAKKAMKIAADICVYTNHNVVVEKIEG.

The active site involves threonine 4. Na(+) contacts are provided by alanine 159, cysteine 162, and threonine 165.

It belongs to the peptidase T1B family. HslV subfamily. As to quaternary structure, a double ring-shaped homohexamer of HslV is capped on each side by a ring-shaped HslU homohexamer. The assembly of the HslU/HslV complex is dependent on binding of ATP.

It localises to the cytoplasm. The catalysed reaction is ATP-dependent cleavage of peptide bonds with broad specificity.. Its activity is regulated as follows. Allosterically activated by HslU binding. Its function is as follows. Protease subunit of a proteasome-like degradation complex believed to be a general protein degrading machinery. The protein is ATP-dependent protease subunit HslV of Wolbachia sp. subsp. Brugia malayi (strain TRS).